The following is a 250-amino-acid chain: MSNDPTHQFLVNKIVPLEIGGIDFSFTNASLFMVATVGAAAGFLYLTTSQRGLIPTRMQSVSEMSYEFIASMLREGAGSHGMKFFPMVFSLFMFILTANLLGMVPYFFTVTSQIIVTFALAVFVIGTVLLYGFYKHGFGFLKLFVPQGVPGALLPLVVAIEIISFLSRPISLSVRLFANMLAGHITLKVFAGFVASLSAFGALGIGGAILPLIMTVALTGLEFLVAFLQAYVFAVLTCMYLNDAVHPGGH.

Transmembrane regions (helical) follow at residues 26-46 (FTNASLFMVATVGAAAGFLYL), 84-104 (FFPMVFSLFMFILTANLLGMV), 114-134 (IIVTFALAVFVIGTVLLYGFY), 143-163 (LFVPQGVPGALLPLVVAIEII), 193-213 (FVASLSAFGALGIGGAILPLI), and 216-236 (VALTGLEFLVAFLQAYVFAVL).

The protein belongs to the ATPase A chain family. In terms of assembly, F-type ATPases have 2 components, CF(1) - the catalytic core - and CF(0) - the membrane proton channel. CF(1) has five subunits: alpha(3), beta(3), gamma(1), delta(1), epsilon(1). CF(0) has three main subunits: a(1), b(2) and c(9-12). The alpha and beta chains form an alternating ring which encloses part of the gamma chain. CF(1) is attached to CF(0) by a central stalk formed by the gamma and epsilon chains, while a peripheral stalk is formed by the delta and b chains.

The protein resides in the cell inner membrane. Functionally, key component of the proton channel; it plays a direct role in the translocation of protons across the membrane. The polypeptide is ATP synthase subunit a (Rhizobium meliloti (strain 1021) (Ensifer meliloti)).